The sequence spans 644 residues: SURP and G-patch domain-containing protein 1 (644 aa).

Residues 44–54 (REIEARMEQKA) show a composition bias toward basic and acidic residues. Disordered stretches follow at residues 44–74 (REIEARMEQKARQSHVASPQPPHPGEVADAQ) and 98–122 (AQASTDSAPRAPPSSPAPSSLKRPL). Thr128 is subject to Phosphothreonine. An SURP motif 1 repeat occupies 188–230 (VIEKLARFVAEGGPELEKVAMEDYKDNPAFTFLHDKNSREFLY). At Ser253 the chain carries Phosphoserine. One copy of the SURP motif 2 repeat lies at 263-306 (LAEKLARFIADGGPEVETIALQNNRENQAFSFLYDPNSQGYRYY). 2 disordered regions span residues 316-342 (AKAGSTGSLPAPVPNPSLRRKSAPEAL) and 360-412 (PAVN…PSPL). Phosphoserine is present on Ser323. Pro residues predominate over residues 360–369 (PAVNPTPSIP). Residues 379 to 385 (KRKRKSR) carry the Nuclear localization signal motif. 4 positions are modified to phosphoserine: Ser408, Ser410, Ser413, and Ser484. The G-patch domain maps to 561–608 (VENIGYQMLMKMGWKEGEGLGTEGQGIKNPVNKGATTIDGAGFGIDRP).

As to quaternary structure, component of the spliceosome.

It localises to the nucleus. Its function is as follows. Plays a role in pre-mRNA splicing. The polypeptide is SURP and G-patch domain-containing protein 1 (Sugp1) (Rattus norvegicus (Rat)).